A 513-amino-acid chain; its full sequence is ATP synthase subunit alpha (513 aa).

ATP is bound at residue 169-176 (GDRQTGKT).

It belongs to the ATPase alpha/beta chains family. In terms of assembly, F-type ATPases have 2 components, CF(1) - the catalytic core - and CF(0) - the membrane proton channel. CF(1) has five subunits: alpha(3), beta(3), gamma(1), delta(1), epsilon(1). CF(0) has three main subunits: a(1), b(2) and c(9-12). The alpha and beta chains form an alternating ring which encloses part of the gamma chain. CF(1) is attached to CF(0) by a central stalk formed by the gamma and epsilon chains, while a peripheral stalk is formed by the delta and b chains.

The protein resides in the cell inner membrane. It catalyses the reaction ATP + H2O + 4 H(+)(in) = ADP + phosphate + 5 H(+)(out). Functionally, produces ATP from ADP in the presence of a proton gradient across the membrane. The alpha chain is a regulatory subunit. This is ATP synthase subunit alpha from Cronobacter sakazakii (strain ATCC BAA-894) (Enterobacter sakazakii).